A 430-amino-acid polypeptide reads, in one-letter code: F-box protein At1g49990 (430 aa).

One can recognise an F-box domain in the interval 1–45 (METGRRRTIPEVEILARLPLRSIARFKSVCKRWKSVIESDYFRRL).

In Arabidopsis thaliana (Mouse-ear cress), this protein is F-box protein At1g49990.